Here is a 120-residue protein sequence, read N- to C-terminus: Large ribosomal subunit protein bL19 (120 aa).

It belongs to the bacterial ribosomal protein bL19 family.

Functionally, this protein is located at the 30S-50S ribosomal subunit interface and may play a role in the structure and function of the aminoacyl-tRNA binding site. The polypeptide is Large ribosomal subunit protein bL19 (Picosynechococcus sp. (strain ATCC 27264 / PCC 7002 / PR-6) (Agmenellum quadruplicatum)).